We begin with the raw amino-acid sequence, 587 residues long: 5-aminolevulinate synthase, erythroid-specific, mitochondrial (587 aa).

The N-terminal 49 residues, 1–49, are a transit peptide targeting the mitochondrion; that stretch reads MVTAAMLLQCCPVLARGPTSLLGKVVKTHQFLFGIGRCPILATQGPNCS. Succinyl-CoA is bound at residue R163. Pyridoxal 5'-phosphate is bound by residues C258 and F259. Succinyl-CoA contacts are provided by S280 and K299. Pyridoxal 5'-phosphate-binding residues include S332, H360, and T388. Residue K391 is part of the active site. At K391 the chain carries N6-(pyridoxal phosphate)lysine. 2 residues coordinate pyridoxal 5'-phosphate: T420 and T421. Residue T508 participates in succinyl-CoA binding.

It belongs to the class-II pyridoxal-phosphate-dependent aminotransferase family. In terms of assembly, homodimer. Interacts with SUCLA2. As to quaternary structure, interacts with SUCLA2. Requires pyridoxal 5'-phosphate as cofactor. As to expression, erythroid-specific.

It localises to the mitochondrion inner membrane. It carries out the reaction succinyl-CoA + glycine + H(+) = 5-aminolevulinate + CO2 + CoA. It participates in porphyrin-containing compound metabolism; protoporphyrin-IX biosynthesis; 5-aminolevulinate from glycine: step 1/1. With respect to regulation, down-regulated by itaconyl-CoA which acts as a competitive inhibitor of succinyl-CoA substrate. Functionally, catalyzes the pyridoxal 5'-phosphate (PLP)-dependent condensation of succinyl-CoA and glycine to form aminolevulinic acid (ALA), with CoA and CO2 as by-products. Contributes significantly to heme formation during erythropoiesis. Catalyzes the pyridoxal 5'-phosphate (PLP)-dependent condensation of succinyl-CoA and glycine to form aminolevulinic acid (ALA), with CoA and CO2 as by-products. Catalytic activity is 75-85% of isoform 1 activity. Its function is as follows. Catalyzes the pyridoxal 5'-phosphate (PLP)-dependent condensation of succinyl-CoA and glycine to form aminolevulinic acid (ALA), with CoA and CO2 as by-products. Catalytic activity is 65-75% of isoform 1 activity. The chain is 5-aminolevulinate synthase, erythroid-specific, mitochondrial from Homo sapiens (Human).